Here is a 784-residue protein sequence, read N- to C-terminus: ATP-dependent 6-phosphofructokinase, platelet type (784 aa).

M1 bears the N-acetylmethionine mark. Residues 1-399 (MDADDSRAPK…NLNTYKRLAI (399 aa)) are N-terminal catalytic PFK domain 1. 3 positions are modified to phosphoserine: S6, S12, and S21. ATP is bound by residues G34, 97-98 (RC), and 127-130 (GDGS). D128 is a binding site for Mg(2+). Phosphoserine is present on S142. Substrate is bound by residues 173–175 (SID), R210, 217–219 (MGR), E273, R301, and 307–310 (HVQR). Residue D175 is the Proton acceptor of the active site. S386 is modified (phosphoserine). An N6-acetyllysine modification is found at K395. The interval 400 to 411 (KLPDDQIPKTNC) is interdomain linker. The interval 412–784 (NVAVINVGAP…QLEHVQPWSV (373 aa)) is C-terminal regulatory PFK domain 2. R481 is a beta-D-fructose 2,6-bisphosphate binding site. The residue at position 486 (K486) is an N6-acetyllysine. Residues 538 to 542 (TVSNN), R576, 583 to 585 (MGG), and E639 contribute to the beta-D-fructose 2,6-bisphosphate site. S540 carries O-linked (GlcNAc) serine glycosylation. Y651 carries the phosphotyrosine modification. Beta-D-fructose 2,6-bisphosphate contacts are provided by residues R665 and 671-674 (HMQQ). K688 is subject to N6-acetyllysine. R744 provides a ligand contact to beta-D-fructose 2,6-bisphosphate. Residue S783 is modified to Phosphoserine.

It belongs to the phosphofructokinase type A (PFKA) family. ATP-dependent PFK group I subfamily. Eukaryotic two domain clade 'E' sub-subfamily. Homo- and heterotetramers. Phosphofructokinase (PFK) enzyme functions as a tetramer composed of different combinations of 3 types of subunits, called PFKM (where M stands for Muscle), PFKL (Liver) and PFKP (Platelet). The composition of the PFK tetramer differs according to the tissue type it is present in. In muscles, it is composed of 4 PFKM subunits (also called M4). In the liver, the predominant form is a tetramer of PFKL subunits (L4). In erythrocytes, both PFKM and PFKL subunits randomly tetramerize to form M4, L4 and other combinations (ML3, M2L2, M3L). In platelets, brain and fibroblasts, PFK contains a higher proportion of PFKP subunits. The kinetic and regulatory properties of the tetrameric enzyme are dependent on the subunit composition, hence can vary across tissues. Interacts with ATG4B; promoting phosphorylation of ATG4B. Requires Mg(2+) as cofactor. Post-translationally, phosphorylation at Ser-386 promotes interaction with ATG4B. GlcNAcylation decreases enzyme activity.

The protein localises to the cytoplasm. It carries out the reaction beta-D-fructose 6-phosphate + ATP = beta-D-fructose 1,6-bisphosphate + ADP + H(+). It functions in the pathway carbohydrate degradation; glycolysis; D-glyceraldehyde 3-phosphate and glycerone phosphate from D-glucose: step 3/4. Its activity is regulated as follows. Allosterically activated by ADP, AMP, or fructose 2,6-bisphosphate, and allosterically inhibited by ATP or citrate. Catalyzes the phosphorylation of D-fructose 6-phosphate to fructose 1,6-bisphosphate by ATP, the first committing step of glycolysis. In Homo sapiens (Human), this protein is ATP-dependent 6-phosphofructokinase, platelet type (PFKP).